Reading from the N-terminus, the 223-residue chain is uncharacterized protein (223 aa).

The protein localises to the plastid. Its subcellular location is the chloroplast. This is an uncharacterized protein from Mesostigma viride (Green alga).